The primary structure comprises 837 residues: Periplasmic nitrate reductase (837 aa).

Positions methionine 1–alanine 33 form a signal peptide, tat-type signal. In terms of domain architecture, 4Fe-4S Mo/W bis-MGD-type spans leucine 44 to aspartate 100. Positions 51, 54, 58, and 86 each coordinate [4Fe-4S] cluster. Mo-bis(molybdopterin guanine dinucleotide) is bound by residues lysine 88, glutamine 155, asparagine 180, cysteine 184, tryptophan 217–methionine 224, serine 248–histidine 252, glutamine 267–aspartate 269, methionine 378, glutamine 382, asparagine 488, serine 514–aspartate 515, lysine 537, aspartate 564, and threonine 724–serine 733. Position 800 (tryptophan 800) interacts with substrate. Residues asparagine 808 and lysine 825 each contribute to the Mo-bis(molybdopterin guanine dinucleotide) site.

Belongs to the prokaryotic molybdopterin-containing oxidoreductase family. NasA/NapA/NarB subfamily. As to quaternary structure, component of the periplasmic nitrate reductase NapAB complex composed of NapA and NapB. The cofactor is [4Fe-4S] cluster. Requires Mo-bis(molybdopterin guanine dinucleotide) as cofactor. Predicted to be exported by the Tat system. The position of the signal peptide cleavage has not been experimentally proven.

The protein localises to the periplasm. It carries out the reaction 2 Fe(II)-[cytochrome] + nitrate + 2 H(+) = 2 Fe(III)-[cytochrome] + nitrite + H2O. Catalytic subunit of the periplasmic nitrate reductase complex NapAB. Receives electrons from NapB and catalyzes the reduction of nitrate to nitrite. This Rhodopseudomonas palustris (strain BisB18) protein is Periplasmic nitrate reductase.